The primary structure comprises 331 residues: Ketol-acid reductoisomerase (NADP(+)) (331 aa).

The region spanning 2–182 (AKVYYDEDAN…GGTKGGVLET (181 aa)) is the KARI N-terminal Rossmann domain. NADP(+) contacts are provided by residues 25-28 (YGSQ), Ser51, Ser53, and 83-86 (DEKQ). Residue His108 is part of the active site. Gly134 serves as a coordination point for NADP(+). In terms of domain architecture, KARI C-terminal knotted spans 183–328 (TFKDETETDL…VELRAMMPWL (146 aa)). Asp191, Glu195, Glu227, and Glu231 together coordinate Mg(2+). Substrate is bound at residue Ser252.

The protein belongs to the ketol-acid reductoisomerase family. Requires Mg(2+) as cofactor.

The enzyme catalyses (2R)-2,3-dihydroxy-3-methylbutanoate + NADP(+) = (2S)-2-acetolactate + NADPH + H(+). It catalyses the reaction (2R,3R)-2,3-dihydroxy-3-methylpentanoate + NADP(+) = (S)-2-ethyl-2-hydroxy-3-oxobutanoate + NADPH + H(+). Its pathway is amino-acid biosynthesis; L-isoleucine biosynthesis; L-isoleucine from 2-oxobutanoate: step 2/4. The protein operates within amino-acid biosynthesis; L-valine biosynthesis; L-valine from pyruvate: step 2/4. Functionally, involved in the biosynthesis of branched-chain amino acids (BCAA). Catalyzes an alkyl-migration followed by a ketol-acid reduction of (S)-2-acetolactate (S2AL) to yield (R)-2,3-dihydroxy-isovalerate. In the isomerase reaction, S2AL is rearranged via a Mg-dependent methyl migration to produce 3-hydroxy-3-methyl-2-ketobutyrate (HMKB). In the reductase reaction, this 2-ketoacid undergoes a metal-dependent reduction by NADPH to yield (R)-2,3-dihydroxy-isovalerate. This Clostridium novyi (strain NT) protein is Ketol-acid reductoisomerase (NADP(+)).